The sequence spans 257 residues: MDVVIRQTPKEVAQLAATIMARYVSEGKNIGLATGSTPLLTYQELIAKHREGLSFANTTAFLLDEYVGLPEDHEQSYHYTIYNEFTQYVDFADGAVHTPDGMNPRTDEAGREYEEAIEAAGGIDIQLLGVGTNGHVGFNEPGSSFDSLTRLKTLHPQTRRDNARFFGSLEQVPIHVITQGLGTIRRAGHLLLLATGENKADAVAKLVEGPVSAMMPASVLQLHRHATVIVDEAAASQLQETEFYRFVDANRPEWQAY.

The active-site Proton acceptor; for enolization step is aspartate 64. Asparagine 133 serves as the catalytic For ring-opening step. The Proton acceptor; for ring-opening step role is filled by histidine 135. The active-site For ring-opening step is glutamate 140.

Belongs to the glucosamine/galactosamine-6-phosphate isomerase family. NagB subfamily.

The enzyme catalyses alpha-D-glucosamine 6-phosphate + H2O = beta-D-fructose 6-phosphate + NH4(+). It functions in the pathway amino-sugar metabolism; N-acetylneuraminate degradation; D-fructose 6-phosphate from N-acetylneuraminate: step 5/5. Its function is as follows. Catalyzes the reversible isomerization-deamination of glucosamine 6-phosphate (GlcN6P) to form fructose 6-phosphate (Fru6P) and ammonium ion. In Corynebacterium urealyticum (strain ATCC 43042 / DSM 7109), this protein is Glucosamine-6-phosphate deaminase.